Here is a 305-residue protein sequence, read N- to C-terminus: Methionyl-tRNA formyltransferase (305 aa).

111-114 (SLLP) is a (6S)-5,6,7,8-tetrahydrofolate binding site.

This sequence belongs to the Fmt family.

It carries out the reaction L-methionyl-tRNA(fMet) + (6R)-10-formyltetrahydrofolate = N-formyl-L-methionyl-tRNA(fMet) + (6S)-5,6,7,8-tetrahydrofolate + H(+). Functionally, attaches a formyl group to the free amino group of methionyl-tRNA(fMet). The formyl group appears to play a dual role in the initiator identity of N-formylmethionyl-tRNA by promoting its recognition by IF2 and preventing the misappropriation of this tRNA by the elongation apparatus. The chain is Methionyl-tRNA formyltransferase from Helicobacter pylori (strain P12).